Consider the following 73-residue polypeptide: NAD(P)H-quinone oxidoreductase subunit L (73 aa).

A run of 2 helical transmembrane segments spans residues 6–26 and 44–64; these read SLIG…LPLL and VLMF…APFM.

It belongs to the complex I NdhL subunit family. As to quaternary structure, NDH-1 can be composed of about 15 different subunits; different subcomplexes with different compositions have been identified which probably have different functions.

It localises to the cellular thylakoid membrane. The catalysed reaction is a plastoquinone + NADH + (n+1) H(+)(in) = a plastoquinol + NAD(+) + n H(+)(out). The enzyme catalyses a plastoquinone + NADPH + (n+1) H(+)(in) = a plastoquinol + NADP(+) + n H(+)(out). Functionally, NDH-1 shuttles electrons from an unknown electron donor, via FMN and iron-sulfur (Fe-S) centers, to quinones in the respiratory and/or the photosynthetic chain. The immediate electron acceptor for the enzyme in this species is believed to be plastoquinone. Couples the redox reaction to proton translocation, and thus conserves the redox energy in a proton gradient. Cyanobacterial NDH-1 also plays a role in inorganic carbon-concentration. This chain is NAD(P)H-quinone oxidoreductase subunit L, found in Synechococcus sp. (strain JA-2-3B'a(2-13)) (Cyanobacteria bacterium Yellowstone B-Prime).